Here is a 204-residue protein sequence, read N- to C-terminus: Probable UMP-CMP kinase 1 (204 aa).

Residue 31–36 (GSGKGT) coordinates ATP. An NMP region spans residues 51–80 (SAGDLLRAEIKSGSEFGAMIQSMIAEGRIV). A ribonucleoside 5'-phosphate contacts are provided by residues Arg57, 78–80 (RIV), and 105–108 (GFPR). Asn112 is a CMP binding site. The interval 143 to 151 (SRNQGREDD) is LID. Arg144 lines the ATP pocket. A ribonucleoside 5'-phosphate-binding residues include Arg148 and Arg159. Residue Lys187 coordinates ATP.

It belongs to the adenylate kinase family. UMP-CMP kinase subfamily. In terms of assembly, monomer. The cofactor is Mg(2+).

Its subcellular location is the cytoplasm. It localises to the nucleus. It carries out the reaction CMP + ATP = CDP + ADP. The catalysed reaction is dCMP + ATP = dCDP + ADP. The enzyme catalyses UMP + ATP = UDP + ADP. In terms of biological role, catalyzes the phosphorylation of pyrimidine nucleoside monophosphates at the expense of ATP. Plays an important role in de novo pyrimidine nucleotide biosynthesis. Has preference for UMP and CMP as phosphate acceptors. This chain is Probable UMP-CMP kinase 1 (UMK1), found in Arabidopsis thaliana (Mouse-ear cress).